A 209-amino-acid polypeptide reads, in one-letter code: uncharacterized protein (209 aa).

This is an uncharacterized protein from Acanthamoeba polyphaga mimivirus (APMV).